Consider the following 140-residue polypeptide: VapC ribonuclease Y4jK (140 aa).

The PINc domain occupies I2–N135. The Mg(2+) site is built by D5 and D104.

Belongs to the PINc/VapC protein family. It depends on Mg(2+) as a cofactor.

Its function is as follows. Toxic component of a type II toxin-antitoxin (TA) system. An RNase. Involved in plasmid stability. In Sinorhizobium fredii (strain NBRC 101917 / NGR234), this protein is VapC ribonuclease Y4jK.